Reading from the N-terminus, the 313-residue chain is Ribosomal RNA small subunit methyltransferase H (313 aa).

S-adenosyl-L-methionine is bound by residues Gly-35–His-37, Asp-55, Phe-80, Asp-102, and Gln-109.

The protein belongs to the methyltransferase superfamily. RsmH family.

The protein localises to the cytoplasm. The enzyme catalyses cytidine(1402) in 16S rRNA + S-adenosyl-L-methionine = N(4)-methylcytidine(1402) in 16S rRNA + S-adenosyl-L-homocysteine + H(+). Specifically methylates the N4 position of cytidine in position 1402 (C1402) of 16S rRNA. This is Ribosomal RNA small subunit methyltransferase H from Shewanella loihica (strain ATCC BAA-1088 / PV-4).